Consider the following 237-residue polypeptide: uncharacterized protein (237 aa).

One can recognise a Response regulatory domain in the interval 3–116 (SALLIDDERF…RLAKTVQRLL (114 aa)). 4-aspartylphosphate is present on aspartate 54. An HTH LytTR-type domain is found at 135 to 236 (IPCTGLNRIV…LKELKEMLGF (102 aa)).

This is an uncharacterized protein from Vibrio cholerae serotype O1 (strain ATCC 39315 / El Tor Inaba N16961).